A 383-amino-acid polypeptide reads, in one-letter code: Decapping nuclease RAI1 (383 aa).

Glu166 is an a divalent metal cation binding site. Glu215 serves as a coordination point for substrate. A divalent metal cation is bound by residues Asp217, Glu235, and Leu236. Substrate is bound by residues Lys237 and Gln261.

Belongs to the DXO/Dom3Z family. As to quaternary structure, interacts with RAT1; the interaction is direct, stabilizes RAT1 protein structure and stimulates its exoribonuclease activity. The interaction also stimulates RAI1 pyrophosphohydrolase activity, probably by recruiting it to mRNA substrates. The cofactor is a divalent metal cation.

It localises to the nucleus. It carries out the reaction a 5'-end NAD(+)-phospho-ribonucleoside in mRNA + H2O = a 5'-end phospho-ribonucleoside in mRNA + NAD(+) + H(+). The enzyme catalyses a 5'-end (N(7)-methyl 5'-triphosphoguanosine)-ribonucleoside-ribonucleotide in mRNA + H2O = a (N(7)-methyl 5'-triphosphoguanosine)-nucleoside + a 5'-end phospho-ribonucleoside in mRNA + H(+). The catalysed reaction is a 5'-end triphospho-ribonucleoside in mRNA + H2O = a 5'-end phospho-ribonucleoside in mRNA + diphosphate + H(+). In terms of biological role, decapping enzyme for NAD-capped RNAs: specifically hydrolyzes the nicotinamide adenine dinucleotide (NAD) cap from a subset of RNAs by removing the entire NAD moiety from the 5'-end of an NAD-capped RNA. The NAD-cap is present at the 5'-end of some RNAs and snoRNAs. In contrast to the canonical 5'-end N7 methylguanosine (m7G) cap, the NAD cap promotes mRNA decay. Also acts as a non-canonical decapping enzyme that removes the entire cap structure of m7G capped or incompletely capped RNAs. Has decapping activity toward incomplete 5'-end m7G cap mRNAs such as unmethylated 5'-end-capped RNA (cap0), while it has no activity toward 2'-O-ribose methylated m7G cap (cap1). Also possesses RNA 5'-pyrophosphohydrolase activity by hydrolyzing the 5'-end triphosphate to release pyrophosphates. Stimulates exoribonuclease activity of Rat1, allowing it to degrade RNAs with stable secondary structure more effectively. This Lachancea thermotolerans (strain ATCC 56472 / CBS 6340 / NRRL Y-8284) (Yeast) protein is Decapping nuclease RAI1.